A 732-amino-acid polypeptide reads, in one-letter code: Probable ATP-dependent RNA helicase DHX35 homolog (732 aa).

The tract at residues 1-50 is disordered; that stretch reads MSYHPGHGHRQEPRKGAGARRGFARPDDSADAPRTGPLIFEERSTENAGA. The Helicase ATP-binding domain maps to 87–251; that stretch reads LYMCERYRTI…FEMNETGNSD (165 aa). 100-107 contributes to the ATP binding site; it reads GETGCGKS. The DEAH box motif lies at 198 to 201; it reads DEAH. One can recognise a Helicase C-terminal domain in the interval 283–457; sequence AVDTVINIHK…STILQLKALG (175 aa).

This sequence belongs to the DEAD box helicase family. DEAH subfamily.

It catalyses the reaction ATP + H2O = ADP + phosphate + H(+). The protein is Probable ATP-dependent RNA helicase DHX35 homolog of Caenorhabditis elegans.